Consider the following 330-residue polypeptide: Small ribosomal subunit protein mS35 (330 aa).

The interval 50 to 73 is disordered; that stretch reads AAGKGVRGQMKPRRQAGEPRTERM. Positions 64 to 73 are enriched in basic and acidic residues; it reads QAGEPRTERM.

Belongs to the mitochondrion-specific ribosomal protein mS35 family. As to quaternary structure, component of the mitochondrial ribosome small subunit (28S) which comprises a 12S rRNA and about 30 distinct proteins.

Its subcellular location is the mitochondrion. This Danio rerio (Zebrafish) protein is Small ribosomal subunit protein mS35 (mrps35).